The chain runs to 292 residues: 4-hydroxy-tetrahydrodipicolinate synthase (292 aa).

T45 provides a ligand contact to pyruvate. The Proton donor/acceptor role is filled by Y133. The Schiff-base intermediate with substrate role is filled by K161. I203 is a pyruvate binding site.

It belongs to the DapA family. In terms of assembly, homotetramer; dimer of dimers.

Its subcellular location is the cytoplasm. The enzyme catalyses L-aspartate 4-semialdehyde + pyruvate = (2S,4S)-4-hydroxy-2,3,4,5-tetrahydrodipicolinate + H2O + H(+). The protein operates within amino-acid biosynthesis; L-lysine biosynthesis via DAP pathway; (S)-tetrahydrodipicolinate from L-aspartate: step 3/4. Functionally, catalyzes the condensation of (S)-aspartate-beta-semialdehyde [(S)-ASA] and pyruvate to 4-hydroxy-tetrahydrodipicolinate (HTPA). In Nitrosomonas eutropha (strain DSM 101675 / C91 / Nm57), this protein is 4-hydroxy-tetrahydrodipicolinate synthase.